The primary structure comprises 199 residues: Neurotrophic factor BDNF precursor form (199 aa).

Residues 1 to 23 (GQGSLAYPGLRTQGNLETLSGPN) form a disordered region. The propeptide occupies 1–100 (GQGSLAYPGL…AANMSMRVRR (100 aa)). Over residues 12–23 (TQGNLETLSGPN) the composition is skewed to polar residues. Asparagine 93 carries an N-linked (GlcNAc...) asparagine glycan. The cysteines at positions 113 and 180 are disulfide-linked.

It belongs to the NGF-beta family.

The protein localises to the secreted. In terms of biological role, promotes the survival of neuronal populations that are all located either in the central nervous system or directly connected to it. The polypeptide is Neurotrophic factor BDNF precursor form (BDNF) (Morelia spilota (Carpet python)).